Reading from the N-terminus, the 185-residue chain is C-phycoerythrin beta chain (185 aa).

Residues Cys-49 and Cys-60 each coordinate (2R,3E)-phycoerythrobilin. Residue Asn-71 is modified to N4-methylasparagine. The (2R,3E)-phycoerythrobilin site is built by Cys-81 and Cys-166.

It belongs to the phycobiliprotein family. In terms of assembly, heterodimer of an alpha and a beta chain. Post-translationally, contains three covalently linked bilin chromophores.

Its subcellular location is the cellular thylakoid membrane. Light-harvesting photosynthetic bile pigment-protein from the phycobiliprotein complex. The sequence is that of C-phycoerythrin beta chain (cpeB) from Pseudanabaena tenuis (strain PCC 7409).